Here is a 71-residue protein sequence, read N- to C-terminus: uncharacterized protein (71 aa).

Residues 1–21 form the signal peptide; it reads MGVGLHGDHVGGELNSANAFT.

This is an uncharacterized protein from Haemophilus influenzae (strain ATCC 51907 / DSM 11121 / KW20 / Rd).